A 188-amino-acid polypeptide reads, in one-letter code: MADEQPQGNGQGAAQQGEQPKQQFQIAKLYLKDVSLETPNSPEVFTGEWKPQVNVDLTSKTRALQEGHYEVALTVTVTAKQGEKTAYLCEVTQAGVFQIKGFEDAARNGLLGAYCPAQLFPYVRETVNSLITQGGFPAMVLQPVNFDALYQQRLAQAAERQKAEQAQGGGAEAKGSDSTAAQGSDTQQ.

Disordered stretches follow at residues 1–21 (MADEQPQGNGQGAAQQGEQPK) and 160–188 (RQKAEQAQGGGAEAKGSDSTAAQGSDTQQ). Polar residues predominate over residues 176–188 (SDSTAAQGSDTQQ).

The protein belongs to the SecB family. In terms of assembly, homotetramer, a dimer of dimers. One homotetramer interacts with 1 SecA dimer.

The protein localises to the cytoplasm. In terms of biological role, one of the proteins required for the normal export of preproteins out of the cell cytoplasm. It is a molecular chaperone that binds to a subset of precursor proteins, maintaining them in a translocation-competent state. It also specifically binds to its receptor SecA. The protein is Protein-export protein SecB of Alkalilimnicola ehrlichii (strain ATCC BAA-1101 / DSM 17681 / MLHE-1).